Reading from the N-terminus, the 612-residue chain is Polyadenylation factor subunit 2 (612 aa).

The tract at residues Met-1 to Ala-21 is disordered. 7 WD repeats span residues Lys-93–Ile-132, Ala-135–Asn-175, His-177–Lys-215, Gly-218–Thr-257, Gly-260–Leu-300, Gly-303–Ser-345, and Ala-373–Val-412. Disordered stretches follow at residues Ala-424–Glu-450, Pro-486–Pro-514, and Pro-544–Arg-612. The span at Trp-430–Glu-442 shows a compositional bias: basic and acidic residues. 2 stretches are compositionally biased toward pro residues: residues Pro-486 to Leu-506 and Pro-544 to Met-575.

The protein resides in the nucleus. Its function is as follows. Required for 3'-end cleavage and polyadenylation of pre-mRNAs. Also involved in chromosome segregation where it has a role in chromosome attachment to the mitotic spindle. The polypeptide is Polyadenylation factor subunit 2 (PFS2) (Gibberella zeae (strain ATCC MYA-4620 / CBS 123657 / FGSC 9075 / NRRL 31084 / PH-1) (Wheat head blight fungus)).